Here is a 313-residue protein sequence, read N- to C-terminus: Probable GTP 3',8-cyclase (313 aa).

A Radical SAM core domain is found at 4–224 (VYGRELEDLR…EIRNKHKRPR (221 aa)). Residue Arg-13 coordinates GTP. [4Fe-4S] cluster contacts are provided by Cys-20, Cys-24, and Cys-27. A GTP-binding site is contributed by Lys-60. Gly-64 is an S-adenosyl-L-methionine binding site. Thr-90 contacts GTP. Ser-114 provides a ligand contact to S-adenosyl-L-methionine. Residue Lys-151 participates in GTP binding. The [4Fe-4S] cluster site is built by Cys-244 and Cys-247. GTP is bound at residue 249–251 (RIR). Cys-261 provides a ligand contact to [4Fe-4S] cluster.

The protein belongs to the radical SAM superfamily. MoaA family. The cofactor is [4Fe-4S] cluster.

It catalyses the reaction GTP + AH2 + S-adenosyl-L-methionine = (8S)-3',8-cyclo-7,8-dihydroguanosine 5'-triphosphate + 5'-deoxyadenosine + L-methionine + A + H(+). It participates in cofactor biosynthesis; molybdopterin biosynthesis. Its function is as follows. Catalyzes the cyclization of GTP to (8S)-3',8-cyclo-7,8-dihydroguanosine 5'-triphosphate. The sequence is that of Probable GTP 3',8-cyclase from Sulfolobus acidocaldarius (strain ATCC 33909 / DSM 639 / JCM 8929 / NBRC 15157 / NCIMB 11770).